We begin with the raw amino-acid sequence, 1495 residues long: MALFRALYIIWVFLLIPLFNAEEFTPKVTRTLSRYVFDIVNFDDSNTLIRADEDSVEISFDAGENWKTIDGIEEPIESFVVDPFRGHDRAFAFVKTAPKFYVTDDQGKSWRPLTIPISEKASNYFCGITTHPIKKKHLIIRCDLLTINDSGVMHVGREIYTTNDGVSFSQVKPSFGKIDGHISTARCDFIKSSEDSDLGGNDASILCLFRNTEYIESTGSTIDKSELILSADGGETFKELVQFKDKVVRRYEILKYHVVVLTQDDMYNEMSSMDIWISNDVCTFQIAHTPTKIRHVNMGQIHEDSIGRIVLSVSRERDDEDSNQPGAAEVLISDSEGLKFLPIKWIPNNQFGYINVAYPGFLKGTFFGSFHPFIEYSDRKRKYSRQKVREETKVSVDNGLTWSNLKVVDRENVDSFGCDVTKPERCSLHTYFYDLRNLRPSAGIMMISGIVGDGSVYDWNEEKTFISRDSGLTWRLVHNSTGLYTTGDLGNIIMYIPYRSNENGDVPSKFYYSLDQGKTWGEYDLIMPIYPYRLISTISDGSGSKFILTGTSITDDPISITYSIDFSAVFDYKSCEEGDFEDWNLADGKCVNGAKYKYRRRKQDAQCLVKKAFKDLSLDETPCNSCTGSDYECSFEFVRDAKGDCIPDYNLIALSDICDKSKDKSVLVEPLQLIKGDKCKTPMKIEPVDIPCDEIPEEGSSDKEIVTTENKFDFEIKFYQYFDTVADESLVMLNSIGDAYISHDGGQTIKRFDTDGEKIVEVVFNPYFNSSAYLFGSKGNIFLTHDRGYSFMIAKLPEARQLGMPLDFSAKAQDTFIYYGGKNCESILSPECHAVAYLTKDGGETFTEMLDNAIHCEFAGTLFKYPSNDDMVMCQVKEKFSQTRSLVSSTDFFQDDKKTVFENIIGYLSTGGYIIVAVPHENNELRAYVTNDGAEFAEAKFPYDEDIGKQDAFTILGSEEGSIFLHLATNLESGHDFGNLLKSNSNGTSFVTLEHAVNRNTFGYVDFEKVQGLEGIIITNIVSNSEKVGEHKGDEQLKTKITFNDGSDWNFLKPPKKDSEGKKFLCDSVSLDKCSLHLHGYTERKDIRDTYSSGSALGMMFGVGNVGDRLLPYEECSTFLTTDGGETWTEVKKGPHQWEYGDHGGVLVLVPENAETDSISYSTDFGKTWKDYKFCGDKVLVKDVITVPRDSALRFLLFGEAKNMGSGSFRTYTIDFRNIFERQCEFDITGKKRADFKYSPLGSRTDCLFGHKTEFLRKTDEKCFIGNIPLSEFSRNVKNCSCTRQDFECDYNFYKASDGTCKLVKGLSSANGADICKKEPDLIEYYDSSGYRKIPLSTCKGGLKLDAHLAPHPCPGKEKAFREKYPINTGAYALVFVTILLVIFFAAWFVYDRGIRRNGGFSRFEEIRLGDDGLIENNRTDRVVNIIVRLGLCISLITKSAFQRAKAGTAQLSSKFRARFGNKKGATYSSLLHDQLSDAFQRAKAGTAQLSCFKI.

The signal sequence occupies residues 1 to 21 (MALFRALYIIWVFLLIPLFNA). Residues 23–1369 (EFTPKVTRTL…AFREKYPINT (1347 aa)) are Lumenal-facing. 2 BNR repeats span residues 58–67 (ISFDAGENWK) and 101–111 (YVTDDQGKSWR). Asparagine 148 carries an N-linked (GlcNAc...) asparagine glycan. BNR repeat units lie at residues 229–238 (LSADGGETFK), 394–403 (VSVDNGLTWS), and 465–475 (FISRDSGLTWR). N-linked (GlcNAc...) asparagine glycosylation occurs at asparagine 479. BNR repeat units lie at residues 511–520 (YYSLDQGKTW) and 740–750 (YISHDGGQTIK). The N-linked (GlcNAc...) asparagine glycan is linked to asparagine 769. The stretch at 837–847 (YLTKDGGETFT) is one BNR 8 repeat. Residue asparagine 986 is glycosylated (N-linked (GlcNAc...) asparagine). BNR repeat units lie at residues 1119 to 1129 (FLTTDGGETWT) and 1161 to 1170 (YSTDFGKTWK). N-linked (GlcNAc...) asparagine glycosylation occurs at asparagine 1279. The helical transmembrane segment at 1370-1390 (GAYALVFVTILLVIFFAAWFV) threads the bilayer. The Cytoplasmic portion of the chain corresponds to 1391-1495 (YDRGIRRNGG…GTAQLSCFKI (105 aa)).

It belongs to the VPS10-related sortilin family.

Its subcellular location is the golgi apparatus. The protein resides in the trans-Golgi network membrane. Functions as a sorting receptor in the Golgi compartment required for the intracellular sorting and delivery of soluble vacuolar proteins, like carboxypeptidase Y (CPY) and proteinase A. This is VPS10 homolog 2 (VTH2) from Saccharomyces cerevisiae (strain Lalvin EC1118 / Prise de mousse) (Baker's yeast).